Reading from the N-terminus, the 449-residue chain is Trigger factor (449 aa).

Residues 172-257 enclose the PPIase FKBP-type domain; the sequence is GDEVRFDFKG…IKEITNVKPQ (86 aa).

This sequence belongs to the FKBP-type PPIase family. Tig subfamily.

Its subcellular location is the cytoplasm. The enzyme catalyses [protein]-peptidylproline (omega=180) = [protein]-peptidylproline (omega=0). Involved in protein export. Acts as a chaperone by maintaining the newly synthesized protein in an open conformation. Functions as a peptidyl-prolyl cis-trans isomerase. The protein is Trigger factor of Ureaplasma parvum serovar 3 (strain ATCC 27815 / 27 / NCTC 11736).